We begin with the raw amino-acid sequence, 401 residues long: Jumonji C domain-containing protein 5 (401 aa).

The JmjC domain occupies 255 to 401 (EYLAQHELFA…PSFSVSFWWE (147 aa)). Fe cation is bound by residues His306, Asp308, and His385.

Requires Fe(2+) as cofactor. In terms of tissue distribution, expressed in neurons close to the dorsal lateral neurons involved in circadian rhythm.

The protein resides in the nucleus. The protein localises to the nucleoplasm. It is found in the cytoplasm. It catalyses the reaction L-arginyl-[protein] + 2-oxoglutarate + O2 = (3R)-3-hydroxy-L-arginyl-[protein] + succinate + CO2. Functionally, bifunctional enzyme that acts both as an endopeptidase and 2-oxoglutarate-dependent monooxygenase. May be involved in regulation of behavior and circadian rhythms. The protein is Jumonji C domain-containing protein 5 of Drosophila melanogaster (Fruit fly).